The sequence spans 301 residues: Acetylglutamate kinase (301 aa).

Substrate-binding positions include 68-69, R90, and N195; that span reads GG.

Belongs to the acetylglutamate kinase family. ArgB subfamily.

Its subcellular location is the cytoplasm. The enzyme catalyses N-acetyl-L-glutamate + ATP = N-acetyl-L-glutamyl 5-phosphate + ADP. It participates in amino-acid biosynthesis; L-arginine biosynthesis; N(2)-acetyl-L-ornithine from L-glutamate: step 2/4. In terms of biological role, catalyzes the ATP-dependent phosphorylation of N-acetyl-L-glutamate. This Pseudomonas entomophila (strain L48) protein is Acetylglutamate kinase.